We begin with the raw amino-acid sequence, 316 residues long: Ribonuclease Z (316 aa).

Zn(2+) contacts are provided by histidine 63, histidine 65, aspartate 67, histidine 68, histidine 143, aspartate 213, and histidine 271. Residue aspartate 67 is the Proton acceptor of the active site.

The protein belongs to the RNase Z family. As to quaternary structure, homodimer. The cofactor is Zn(2+).

It carries out the reaction Endonucleolytic cleavage of RNA, removing extra 3' nucleotides from tRNA precursor, generating 3' termini of tRNAs. A 3'-hydroxy group is left at the tRNA terminus and a 5'-phosphoryl group is left at the trailer molecule.. Functionally, zinc phosphodiesterase, which displays some tRNA 3'-processing endonuclease activity. Probably involved in tRNA maturation, by removing a 3'-trailer from precursor tRNA. The polypeptide is Ribonuclease Z (Bacteroides thetaiotaomicron (strain ATCC 29148 / DSM 2079 / JCM 5827 / CCUG 10774 / NCTC 10582 / VPI-5482 / E50)).